Consider the following 270-residue polypeptide: Dehydrodolichyl diphosphate synthase (270 aa).

The protein belongs to the UPP synthase family.

The protein resides in the endoplasmic reticulum membrane. It functions in the pathway protein modification; protein glycosylation. In terms of biological role, cis-prenyl transferase that adds multiple copies of isopentenyl pyrophosphate (IPP) to farnesyl pyrophosphate (FPP) to produce dehydrodolichyl diphosphate (Dedol-PP). The sequence is that of Dehydrodolichyl diphosphate synthase (RER2) from Encephalitozoon cuniculi (strain GB-M1) (Microsporidian parasite).